The chain runs to 467 residues: Asparagine--tRNA ligase (467 aa).

Belongs to the class-II aminoacyl-tRNA synthetase family. As to quaternary structure, homodimer.

The protein localises to the cytoplasm. The catalysed reaction is tRNA(Asn) + L-asparagine + ATP = L-asparaginyl-tRNA(Asn) + AMP + diphosphate + H(+). The chain is Asparagine--tRNA ligase from Protochlamydia amoebophila (strain UWE25).